We begin with the raw amino-acid sequence, 316 residues long: 4-hydroxy-3-methylbut-2-enyl diphosphate reductase (316 aa).

Residue Cys12 participates in [4Fe-4S] cluster binding. The (2E)-4-hydroxy-3-methylbut-2-enyl diphosphate site is built by His41 and His74. 2 residues coordinate dimethylallyl diphosphate: His41 and His74. Isopentenyl diphosphate is bound by residues His41 and His74. Cys96 is a binding site for [4Fe-4S] cluster. His124 provides a ligand contact to (2E)-4-hydroxy-3-methylbut-2-enyl diphosphate. His124 is a dimethylallyl diphosphate binding site. His124 is an isopentenyl diphosphate binding site. Glu126 (proton donor) is an active-site residue. Thr169 contacts (2E)-4-hydroxy-3-methylbut-2-enyl diphosphate. Cys199 is a binding site for [4Fe-4S] cluster. (2E)-4-hydroxy-3-methylbut-2-enyl diphosphate-binding residues include Ser227, Ser228, Asn229, and Ser271. Positions 227, 228, 229, and 271 each coordinate dimethylallyl diphosphate. Isopentenyl diphosphate is bound by residues Ser227, Ser228, Asn229, and Ser271.

It belongs to the IspH family. [4Fe-4S] cluster is required as a cofactor.

The enzyme catalyses isopentenyl diphosphate + 2 oxidized [2Fe-2S]-[ferredoxin] + H2O = (2E)-4-hydroxy-3-methylbut-2-enyl diphosphate + 2 reduced [2Fe-2S]-[ferredoxin] + 2 H(+). The catalysed reaction is dimethylallyl diphosphate + 2 oxidized [2Fe-2S]-[ferredoxin] + H2O = (2E)-4-hydroxy-3-methylbut-2-enyl diphosphate + 2 reduced [2Fe-2S]-[ferredoxin] + 2 H(+). It participates in isoprenoid biosynthesis; dimethylallyl diphosphate biosynthesis; dimethylallyl diphosphate from (2E)-4-hydroxy-3-methylbutenyl diphosphate: step 1/1. Its pathway is isoprenoid biosynthesis; isopentenyl diphosphate biosynthesis via DXP pathway; isopentenyl diphosphate from 1-deoxy-D-xylulose 5-phosphate: step 6/6. Functionally, catalyzes the conversion of 1-hydroxy-2-methyl-2-(E)-butenyl 4-diphosphate (HMBPP) into a mixture of isopentenyl diphosphate (IPP) and dimethylallyl diphosphate (DMAPP). Acts in the terminal step of the DOXP/MEP pathway for isoprenoid precursor biosynthesis. The polypeptide is 4-hydroxy-3-methylbut-2-enyl diphosphate reductase (Xylella fastidiosa (strain M12)).